A 119-amino-acid chain; its full sequence is Large ribosomal subunit protein P3z (119 aa).

The span at 79 to 90 shows a compositional bias: gly residues; the sequence is AGGAASSGGGAG. The interval 79 to 119 is disordered; sequence AGGAASSGGGAGEAAAAPKEDEKKKEESEEEEGDFGFDLFG. The span at 96–105 shows a compositional bias: basic and acidic residues; the sequence is PKEDEKKKEE.

This sequence belongs to the eukaryotic ribosomal protein P1/P2 family. In terms of processing, phosphorylated.

Plays an important role in the elongation step of protein synthesis. The polypeptide is Large ribosomal subunit protein P3z (RPP3A) (Arabidopsis thaliana (Mouse-ear cress)).